The sequence spans 244 residues: Triosephosphate isomerase (244 aa).

Substrate is bound at residue Asn9–Lys11. The active-site Electrophile is the His93. Glu160 functions as the Proton acceptor in the catalytic mechanism. Gly166 and Ser206 together coordinate substrate.

Belongs to the triosephosphate isomerase family. Homodimer.

The protein resides in the cytoplasm. It catalyses the reaction D-glyceraldehyde 3-phosphate = dihydroxyacetone phosphate. Its pathway is carbohydrate biosynthesis; gluconeogenesis. It functions in the pathway carbohydrate degradation; glycolysis; D-glyceraldehyde 3-phosphate from glycerone phosphate: step 1/1. In terms of biological role, involved in the gluconeogenesis. Catalyzes stereospecifically the conversion of dihydroxyacetone phosphate (DHAP) to D-glyceraldehyde-3-phosphate (G3P). This is Triosephosphate isomerase from Mycoplasma pneumoniae (strain ATCC 29342 / M129 / Subtype 1) (Mycoplasmoides pneumoniae).